A 238-amino-acid polypeptide reads, in one-letter code: Pyruvate formate-lyase-activating enzyme (238 aa).

The Radical SAM core domain maps to 15-236; it reads VDGPGIRTVV…KKLEKYLKEL (222 aa). [4Fe-4S] cluster-binding residues include cysteine 29, cysteine 33, and cysteine 36. S-adenosyl-L-methionine is bound by residues 35-37, glycine 78, 126-128, and histidine 199; these read YCH and DIK.

Belongs to the organic radical-activating enzymes family. [4Fe-4S] cluster is required as a cofactor.

It localises to the cytoplasm. It carries out the reaction glycyl-[formate C-acetyltransferase] + reduced [flavodoxin] + S-adenosyl-L-methionine = glycin-2-yl radical-[formate C-acetyltransferase] + semiquinone [flavodoxin] + 5'-deoxyadenosine + L-methionine + H(+). Functionally, activation of pyruvate formate-lyase under anaerobic conditions by generation of an organic free radical, using S-adenosylmethionine and reduced flavodoxin as cosubstrates to produce 5'-deoxy-adenosine. The sequence is that of Pyruvate formate-lyase-activating enzyme (act) from Clostridium pasteurianum.